Consider the following 315-residue polypeptide: Homoserine O-succinyltransferase (315 aa).

Cys142 acts as the Acyl-thioester intermediate in catalysis. Lys163 and Ser192 together coordinate substrate. The active-site Proton acceptor is the His235. Glu237 is a catalytic residue. Arg249 serves as a coordination point for substrate.

It belongs to the MetA family.

Its subcellular location is the cytoplasm. The enzyme catalyses L-homoserine + succinyl-CoA = O-succinyl-L-homoserine + CoA. It functions in the pathway amino-acid biosynthesis; L-methionine biosynthesis via de novo pathway; O-succinyl-L-homoserine from L-homoserine: step 1/1. Transfers a succinyl group from succinyl-CoA to L-homoserine, forming succinyl-L-homoserine. The protein is Homoserine O-succinyltransferase of Tolumonas auensis (strain DSM 9187 / NBRC 110442 / TA 4).